Reading from the N-terminus, the 672-residue chain is Spermatid perinuclear RNA-binding protein (672 aa).

Positions 5-363 (RSFANDDRHV…ALKRPFEDGL (359 aa)) constitute a DZF domain. The tract at residues 349 to 371 (GAGSSALKRPFEDGLGDDKDPNK) is disordered. The segment covering 357 to 371 (RPFEDGLGDDKDPNK) has biased composition (basic and acidic residues). The region spanning 387–453 (DLMNALMRLN…AVKVLQAMGY (67 aa)) is the DRBM 1 domain. Residues 467-476 (DEKSDNESKN) show a composition bias toward basic and acidic residues. A disordered region spans residues 467–514 (DEKSDNESKNDTVSSNSSNNTGNSTTETSSTLEVRTQGPILTASGKNP). Residues 477–497 (DTVSSNSSNNTGNSTTETSST) show a composition bias toward low complexity. One can recognise a DRBM 2 domain in the interval 510–576 (SGKNPVMELN…ALAALEKLFS (67 aa)). 2 positions are modified to asymmetric dimethylarginine: Arg612 and Arg617.

As to quaternary structure, interacts with EIF2AK2. Associates with microtubules; it is unsure whether such interaction is direct or indirect. In terms of tissue distribution, isoform 2 is expressed in spermatocytes (at protein level). Expressed in testis, thymus, ovary, liver, kidney, heart, spleen and brain. Expressed in cortex, dentate gyrus and Purkinje cell layer and granule cells of the cerebellum.

Its subcellular location is the cytoplasm. The protein localises to the cytoskeleton. Involved in spermatogenesis and sperm function. Plays a role in regulation of cell growth. Binds to double-stranded DNA and RNA. Binds most efficiently to poly(I:C) RNA than to poly(dI:dC) DNA. Also binds to single-stranded poly(G) RNA. Binds non-specifically to the mRNA PRM1 3'-UTR and adenovirus VA RNA. This is Spermatid perinuclear RNA-binding protein (Strbp) from Mus musculus (Mouse).